We begin with the raw amino-acid sequence, 119 residues long: Small ribosomal subunit protein uS13 (119 aa).

The disordered stretch occupies residues 90–119; sequence IRHRRGLPLRGQRTRSNARTRKGKRKPIRS. The segment covering 91 to 119 has biased composition (basic residues); that stretch reads RHRRGLPLRGQRTRSNARTRKGKRKPIRS.

This sequence belongs to the universal ribosomal protein uS13 family. Part of the 30S ribosomal subunit. Forms a loose heterodimer with protein S19. Forms two bridges to the 50S subunit in the 70S ribosome.

Functionally, located at the top of the head of the 30S subunit, it contacts several helices of the 16S rRNA. In the 70S ribosome it contacts the 23S rRNA (bridge B1a) and protein L5 of the 50S subunit (bridge B1b), connecting the 2 subunits; these bridges are implicated in subunit movement. Contacts the tRNAs in the A and P-sites. This is Small ribosomal subunit protein uS13 from Coxiella burnetii (strain CbuK_Q154) (Coxiella burnetii (strain Q154)).